A 56-amino-acid chain; its full sequence is uncharacterized protein (56 aa).

This is an uncharacterized protein from Saccharolobus islandicus (Sulfolobus islandicus).